Reading from the N-terminus, the 326-residue chain is Ketol-acid reductoisomerase (NADP(+)) (326 aa).

In terms of domain architecture, KARI N-terminal Rossmann spans 2–182 (AKIYGDEDAS…GFTRAGVIKT (181 aa)). Residues 25 to 28 (YGSQ), Arg-48, Ser-53, and 83 to 86 (DEVQ) each bind NADP(+). His-108 is an active-site residue. Gly-134 is a binding site for NADP(+). Residues 183–325 (TFREEVETDL…ERLRKMMGFE (143 aa)) enclose the KARI C-terminal knotted domain. Residues Asp-191, Glu-195, Glu-227, and Glu-231 each contribute to the Mg(2+) site. Substrate is bound at residue Ser-252.

Belongs to the ketol-acid reductoisomerase family. It depends on Mg(2+) as a cofactor.

The catalysed reaction is (2R)-2,3-dihydroxy-3-methylbutanoate + NADP(+) = (2S)-2-acetolactate + NADPH + H(+). The enzyme catalyses (2R,3R)-2,3-dihydroxy-3-methylpentanoate + NADP(+) = (S)-2-ethyl-2-hydroxy-3-oxobutanoate + NADPH + H(+). It participates in amino-acid biosynthesis; L-isoleucine biosynthesis; L-isoleucine from 2-oxobutanoate: step 2/4. The protein operates within amino-acid biosynthesis; L-valine biosynthesis; L-valine from pyruvate: step 2/4. In terms of biological role, involved in the biosynthesis of branched-chain amino acids (BCAA). Catalyzes an alkyl-migration followed by a ketol-acid reduction of (S)-2-acetolactate (S2AL) to yield (R)-2,3-dihydroxy-isovalerate. In the isomerase reaction, S2AL is rearranged via a Mg-dependent methyl migration to produce 3-hydroxy-3-methyl-2-ketobutyrate (HMKB). In the reductase reaction, this 2-ketoacid undergoes a metal-dependent reduction by NADPH to yield (R)-2,3-dihydroxy-isovalerate. The polypeptide is Ketol-acid reductoisomerase (NADP(+)) (Methanopyrus kandleri (strain AV19 / DSM 6324 / JCM 9639 / NBRC 100938)).